The following is a 435-amino-acid chain: MAPFGRNLLKTRHKNRSPTKDMDSEEKEIVVWVCQEEKLVCGLTKRTTSADVIQALLEEHEATFGEKRFLLGKPSDYCIIEKWRGSERVLPPLTRILKLWKAWGDEQPNMQFVLVKADAFLPVPLWRTAEAKLVQNTEKLWELSPANYMKTLPPDKQKRIVRKTFRKLAKIKQDTVSHDRDNMETLVHLIISQDHTIHQQVKRMKELDLEIEKCEAKFHLDRVENDGENYVQDAYLMPSFSEVEQNLDLQYEENQTLEDLSESDGIEQLEERLKYYRILIDKLSAEIEKEVKSVCIDINEDAEGEAASELESSNLESVKCDLEKSMKAGLKIHSHLSGIQKEIKYSDSLLQMKAKEYELLAKEFNSLHISNKDGCQLKENRAKESEVPSSNGEIPPFTQRVFSNYTNDTDSDTGISSNHSQDSETTVGDVVLLST.

The tract at residues 1–22 (MAPFGRNLLKTRHKNRSPTKDM) is disordered. The region spanning 25-119 (EEKEIVVWVC…MQFVLVKADA (95 aa)) is the Ras-associating domain. Positions 195 to 290 (HTIHQQVKRM…DKLSAEIEKE (96 aa)) form a coiled coil. The tract at residues 380–435 (NRAKESEVPSSNGEIPPFTQRVFSNYTNDTDSDTGISSNHSQDSETTVGDVVLLST) is disordered. The segment covering 400-426 (RVFSNYTNDTDSDTGISSNHSQDSETT) has biased composition (polar residues).

As to quaternary structure, interacts with PAM.

It localises to the endosome. May play a role in regulating vesicuar trafficking in cells. The chain is Ras association domain-containing protein 9 (RASSF9) from Homo sapiens (Human).